The sequence spans 183 residues: MSAITPYDWAIIAFVIGVTFLCVFMLTVPLLLGGKSWGRAKQEQFESGVVSAGGARIRLSAKFYLVAIFFVVFDLEALYLYAWATSVREVGWMGFTTMVIFVVDLLIALIYVFATGALTWSPSDRRKAAGIKPKIGSPNMNIAEITRFNSIEELVIDPTGHIPAQSSGRMKSKTSTAPSSKQE.

Transmembrane regions (helical) follow at residues 11–31 (IIAF…VPLL), 63–83 (FYLV…LYAW), and 98–118 (MVIF…TGAL). The interval 160–183 (GHIPAQSSGRMKSKTSTAPSSKQE) is disordered. Over residues 164-183 (AQSSGRMKSKTSTAPSSKQE) the composition is skewed to polar residues.

This sequence belongs to the complex I subunit 3 family. As to quaternary structure, NDH-1 is composed of 14 different subunits. Subunits NuoA, H, J, K, L, M, N constitute the membrane sector of the complex.

It is found in the cell inner membrane. It carries out the reaction a quinone + NADH + 5 H(+)(in) = a quinol + NAD(+) + 4 H(+)(out). NDH-1 shuttles electrons from NADH, via FMN and iron-sulfur (Fe-S) centers, to quinones in the respiratory chain. The immediate electron acceptor for the enzyme in this species is believed to be ubiquinone. Couples the redox reaction to proton translocation (for every two electrons transferred, four hydrogen ions are translocated across the cytoplasmic membrane), and thus conserves the redox energy in a proton gradient. This Acinetobacter baylyi (strain ATCC 33305 / BD413 / ADP1) protein is NADH-quinone oxidoreductase subunit A.